Here is a 132-residue protein sequence, read N- to C-terminus: Small ribosomal subunit protein uS11 (132 aa).

The disordered stretch occupies residues 1-24 (MAAQKQAARKPRRRDRKSVPVGQA). The segment covering 7 to 16 (AARKPRRRDR) has biased composition (basic residues).

This sequence belongs to the universal ribosomal protein uS11 family. In terms of assembly, part of the 30S ribosomal subunit. Interacts with proteins S7 and S18. Binds to IF-3.

Its function is as follows. Located on the platform of the 30S subunit, it bridges several disparate RNA helices of the 16S rRNA. Forms part of the Shine-Dalgarno cleft in the 70S ribosome. In Bifidobacterium adolescentis (strain ATCC 15703 / DSM 20083 / NCTC 11814 / E194a), this protein is Small ribosomal subunit protein uS11.